Reading from the N-terminus, the 273-residue chain is Acetyl-coenzyme A carboxylase carboxyl transferase subunit alpha (273 aa).

The CoA carboxyltransferase C-terminal domain maps to 1–244; the sequence is MKKATQSKAW…KVVLKQALDE (244 aa).

This sequence belongs to the AccA family. In terms of assembly, acetyl-CoA carboxylase is a heterohexamer composed of biotin carboxyl carrier protein (AccB), biotin carboxylase (AccC) and two subunits each of ACCase subunit alpha (AccA) and ACCase subunit beta (AccD).

It localises to the cytoplasm. It catalyses the reaction N(6)-carboxybiotinyl-L-lysyl-[protein] + acetyl-CoA = N(6)-biotinyl-L-lysyl-[protein] + malonyl-CoA. It functions in the pathway lipid metabolism; malonyl-CoA biosynthesis; malonyl-CoA from acetyl-CoA: step 1/1. Component of the acetyl coenzyme A carboxylase (ACC) complex. First, biotin carboxylase catalyzes the carboxylation of biotin on its carrier protein (BCCP) and then the CO(2) group is transferred by the carboxyltransferase to acetyl-CoA to form malonyl-CoA. The sequence is that of Acetyl-coenzyme A carboxylase carboxyl transferase subunit alpha from Acinetobacter baumannii (strain ACICU).